The primary structure comprises 446 residues: Probable D-serine dehydratase (446 aa).

Residue Lys-113 is modified to N6-(pyridoxal phosphate)lysine.

Belongs to the serine/threonine dehydratase family. DsdA subfamily. Pyridoxal 5'-phosphate serves as cofactor.

It carries out the reaction D-serine = pyruvate + NH4(+). The protein is Probable D-serine dehydratase of Burkholderia lata (strain ATCC 17760 / DSM 23089 / LMG 22485 / NCIMB 9086 / R18194 / 383).